We begin with the raw amino-acid sequence, 545 residues long: ATP synthase subunit alpha (545 aa).

173-180 (GDRQTGKT) lines the ATP pocket.

The protein belongs to the ATPase alpha/beta chains family. As to quaternary structure, F-type ATPases have 2 components, CF(1) - the catalytic core - and CF(0) - the membrane proton channel. CF(1) has five subunits: alpha(3), beta(3), gamma(1), delta(1), epsilon(1). CF(0) has three main subunits: a(1), b(2) and c(9-12). The alpha and beta chains form an alternating ring which encloses part of the gamma chain. CF(1) is attached to CF(0) by a central stalk formed by the gamma and epsilon chains, while a peripheral stalk is formed by the delta and b chains.

The protein resides in the cell membrane. It carries out the reaction ATP + H2O + 4 H(+)(in) = ADP + phosphate + 5 H(+)(out). Functionally, produces ATP from ADP in the presence of a proton gradient across the membrane. The alpha chain is a regulatory subunit. This Clavibacter sepedonicus (Clavibacter michiganensis subsp. sepedonicus) protein is ATP synthase subunit alpha.